The following is a 129-amino-acid chain: ATP synthase epsilon chain (129 aa).

This sequence belongs to the ATPase epsilon chain family. F-type ATPases have 2 components, CF(1) - the catalytic core - and CF(0) - the membrane proton channel. CF(1) has five subunits: alpha(3), beta(3), gamma(1), delta(1), epsilon(1). CF(0) has three main subunits: a, b and c.

It is found in the cell inner membrane. Produces ATP from ADP in the presence of a proton gradient across the membrane. In Campylobacter fetus subsp. fetus (strain 82-40), this protein is ATP synthase epsilon chain.